A 249-amino-acid chain; its full sequence is 5-oxoprolinase subunit A (249 aa).

Belongs to the LamB/PxpA family. Forms a complex composed of PxpA, PxpB and PxpC.

It catalyses the reaction 5-oxo-L-proline + ATP + 2 H2O = L-glutamate + ADP + phosphate + H(+). Its function is as follows. Catalyzes the cleavage of 5-oxoproline to form L-glutamate coupled to the hydrolysis of ATP to ADP and inorganic phosphate. The protein is 5-oxoprolinase subunit A of Limosilactobacillus fermentum (strain NBRC 3956 / LMG 18251) (Lactobacillus fermentum).